The sequence spans 556 residues: Formate--tetrahydrofolate ligase (556 aa).

Position 65–72 (65–72 (TPAGEGKT)) interacts with ATP.

Belongs to the formate--tetrahydrofolate ligase family.

The enzyme catalyses (6S)-5,6,7,8-tetrahydrofolate + formate + ATP = (6R)-10-formyltetrahydrofolate + ADP + phosphate. The protein operates within one-carbon metabolism; tetrahydrofolate interconversion. The protein is Formate--tetrahydrofolate ligase of Alkaliphilus oremlandii (strain OhILAs) (Clostridium oremlandii (strain OhILAs)).